The chain runs to 294 residues: Taste receptor type 2 member 143 (294 aa).

Residues 1–7 (MPSTPTL) lie on the Extracellular side of the membrane. The helical transmembrane segment at 8–28 (IFIVIFFLVSVASMLQNGFMI) threads the bilayer. Topologically, residues 29–43 (IVLGREWMRNRALPA) are cytoplasmic. Residues 44-64 (VDMIVASLASSRFCLHGIAIL) form a helical membrane-spanning segment. The Extracellular portion of the chain corresponds to 65 to 80 (NNFLASFDFCYQANFV). A helical transmembrane segment spans residues 81-101 (GILWDFINTLILWLTAWLAIF). Over 102–128 (YCVKISSFSHPVLFWLKWRISQLVPRL) the chain is Cytoplasmic. The chain crosses the membrane as a helical span at residues 129–149 (LLVSLIMGGLSAIISATGNII). At 150 to 180 (ANQMIISQGFHGNCTFGHMSLDFYRYYYLSH) the chain is on the extracellular side. N-linked (GlcNAc...) asparagine glycosylation occurs at Asn-162. Residues 181 to 201 (AVLMWFTPFFLFLVSIIFLMF) traverse the membrane as a helical segment. Residues 202 to 227 (SLYRHVEKMRGHRPGPWDPRTQAHTM) lie on the Cytoplasmic side of the membrane. Residues 228-248 (ALKSLTVFITFYILFFLALII) form a helical membrane-spanning segment. Residues 249 to 260 (SSTKSKTMHSYW) are Extracellular-facing. A helical membrane pass occupies residues 261–281 (YWVREIIIYTGIFLNSIILVL). At 282–294 (SNPKLRKALKMRF) the chain is on the cytoplasmic side.

This sequence belongs to the G-protein coupled receptor T2R family.

It is found in the membrane. Its function is as follows. Putative taste receptor which may play a role in the perception of bitterness. The protein is Taste receptor type 2 member 143 of Rattus norvegicus (Rat).